The sequence spans 370 residues: Coiled-coil domain-containing protein 89 (370 aa).

The segment at 1–21 is disordered; sequence MPQEEKTLRMDTPPPDEILGK. T12 is modified (phosphothreonine). Residues 36–346 are a coiled coil; that stretch reads KEMDGLREAL…YDELRLQSEA (311 aa).

The protein belongs to the CCDC89 family. As to quaternary structure, interacts with HEY1. In terms of tissue distribution, expression is restricted to the adult testis, where localization is almost exclusive to round spermatids.

Its subcellular location is the cytoplasm. The protein localises to the nucleus. The protein is Coiled-coil domain-containing protein 89 of Mus musculus (Mouse).